A 552-amino-acid polypeptide reads, in one-letter code: Glucose-6-phosphate isomerase (552 aa).

The active-site Proton donor is the Glu-359. Catalysis depends on residues His-390 and Lys-514.

This sequence belongs to the GPI family.

It localises to the cytoplasm. It catalyses the reaction alpha-D-glucose 6-phosphate = beta-D-fructose 6-phosphate. The protein operates within carbohydrate biosynthesis; gluconeogenesis. Its pathway is carbohydrate degradation; glycolysis; D-glyceraldehyde 3-phosphate and glycerone phosphate from D-glucose: step 2/4. Catalyzes the reversible isomerization of glucose-6-phosphate to fructose-6-phosphate. The chain is Glucose-6-phosphate isomerase from Streptomyces griseus subsp. griseus (strain JCM 4626 / CBS 651.72 / NBRC 13350 / KCC S-0626 / ISP 5235).